We begin with the raw amino-acid sequence, 876 residues long: MAP7 domain-containing protein 3 (876 aa).

Met-1 is subject to N-acetylmethionine. A coiled-coil region spans residues 65–144 (NDIKQRLARE…DEAQKEKFTA (80 aa)). Disordered stretches follow at residues 72–137 (ARER…KDEA) and 170–246 (AMAN…KPRV). Over residues 171 to 183 (MANSESKTANKRS) the composition is skewed to polar residues. Position 185 is a phosphoserine (Ser-185). Residues 191–211 (QGTSALIRQMPLSSAGLQNSV) are compositionally biased toward polar residues. Over residues 214-244 (RKTDKERSSSLNRRDSNLHSSTDKEQAERKP) the composition is skewed to basic and acidic residues. Ser-322 carries the post-translational modification Phosphoserine. The tract at residues 407-475 (EAAPEGSLEA…ARDAPKKSEM (69 aa)) is disordered. Over residues 425–438 (APKESVKGSPKESM) the composition is skewed to basic and acidic residues. 3 positions are modified to phosphoserine: Ser-441, Ser-457, and Ser-461. A compositionally biased stretch (basic and acidic residues) spans 465-475 (KARDAPKKSEM). Ser-490 is modified (phosphoserine). Disordered stretches follow at residues 509-533 (SPISTNRQIQKNCPPSPLPLISKQS), 613-697 (QREK…KKEH), and 723-754 (RKTDVNASKVTETSSHDIYEEAEADNEESDKD). The span at 510-521 (PISTNRQIQKNC) shows a compositional bias: polar residues. The residue at position 524 (Ser-524) is a Phosphoserine. 2 coiled-coil regions span residues 558 to 640 (VKKK…MAKE) and 689 to 724 (EADKRKKEHERIMLQNLQERLERKKRIEEIMKRTRK). Basic and acidic residues-rich tracts occupy residues 613 to 639 (QREKEEEERQREEMQQRVIKKSKDMAK) and 680 to 697 (GDAKIKAQEEADKRKKEH). Acidic residues predominate over residues 742–752 (EEAEADNEESD). Phosphoserine is present on residues Ser-770 and Ser-817. The tract at residues 802-876 (PKTYFNGDLK…LPKSSDTFRQ (75 aa)) is disordered. Residues 820–830 (DTSIQEVVSRP) are compositionally biased toward polar residues. Over residues 831–842 (SSKRMTSHTTKT) the composition is skewed to basic residues. Position 832 is a phosphoserine (Ser-832). Polar residues predominate over residues 848 to 860 (TNTTSRSSAQTKS). The span at 861–876 (EGFHDILPKSSDTFRQ) shows a compositional bias: basic and acidic residues.

It belongs to the MAP7 family. As to quaternary structure, interacts (via N-terminus coiled coil domains) with tubulin and microtubules.

The protein localises to the cytoplasm. It localises to the cytoskeleton. It is found in the spindle. Promotes the assembly and stability of microtubules. The protein is MAP7 domain-containing protein 3 (MAP7D3) of Homo sapiens (Human).